Consider the following 88-residue polypeptide: Defensin-like protein 98 (88 aa).

The first 29 residues, 1 to 29 (MGSLRVSTVVIAVVACLSILLISPTEVDG), serve as a signal peptide directing secretion. Disulfide bonds link Cys33–Cys76, Cys40–Cys62, Cys46–Cys73, and Cys50–Cys75.

The protein belongs to the DEFL family.

The protein resides in the secreted. In Arabidopsis thaliana (Mouse-ear cress), this protein is Defensin-like protein 98.